Here is a 290-residue protein sequence, read N- to C-terminus: Glycine--tRNA ligase alpha subunit (290 aa).

The protein belongs to the class-II aminoacyl-tRNA synthetase family. As to quaternary structure, tetramer of two alpha and two beta subunits.

Its subcellular location is the cytoplasm. The catalysed reaction is tRNA(Gly) + glycine + ATP = glycyl-tRNA(Gly) + AMP + diphosphate. The sequence is that of Glycine--tRNA ligase alpha subunit from Synechococcus sp. (strain CC9902).